The sequence spans 334 residues: Glutaminase (334 aa).

The substrate site is built by S76, N126, E170, N177, Y201, Y253, and V271.

This sequence belongs to the glutaminase family. As to quaternary structure, homotetramer.

It catalyses the reaction L-glutamine + H2O = L-glutamate + NH4(+). This chain is Glutaminase, found in Nostoc sp. (strain PCC 7120 / SAG 25.82 / UTEX 2576).